The sequence spans 322 residues: Cytochrome c biogenesis protein CcsA (322 aa).

The next 6 membrane-spanning stretches (helical) occupy residues 9–29, 44–64, 143–163, 226–246, 259–276, and 289–309; these read ILTHISFSTISIVITIHLITL, GMIVTFFSITGFLVSRWASSG, MLLSYATLLGGPPLSAAILII, VISLGFTLLTGGILGGAVWAN, ETWAFITWTIFAIYLHSR, and IASIGFLIIWICYFGINLLGI.

It belongs to the CcmF/CycK/Ccl1/NrfE/CcsA family. As to quaternary structure, may interact with Ccs1.

The protein resides in the plastid. It is found in the chloroplast thylakoid membrane. In terms of biological role, required during biogenesis of c-type cytochromes (cytochrome c6 and cytochrome f) at the step of heme attachment. The sequence is that of Cytochrome c biogenesis protein CcsA from Triticum aestivum (Wheat).